The sequence spans 203 residues: Probable GTP-binding protein EngB (203 aa).

The EngB-type G domain maps to Asp-24–Leu-199. Residues Gly-32–Ser-39, Gly-59–Gln-63, Asp-77–Gly-80, Thr-144–Asp-147, and Phe-178–Ser-180 each bind GTP. Mg(2+)-binding residues include Ser-39 and Thr-61.

Belongs to the TRAFAC class TrmE-Era-EngA-EngB-Septin-like GTPase superfamily. EngB GTPase family. The cofactor is Mg(2+).

Its function is as follows. Necessary for normal cell division and for the maintenance of normal septation. The sequence is that of Probable GTP-binding protein EngB from Xylella fastidiosa (strain Temecula1 / ATCC 700964).